We begin with the raw amino-acid sequence, 819 residues long: Hypoxia-inducible factor 1-alpha (819 aa).

The segment at M1–R31 is disordered. The interaction with TSGA10 stretch occupies residues M1 to A402. Residues G7–R31 are compositionally biased toward basic and acidic residues. The region spanning R18–R71 is the bHLH domain. A DNA-binding region spans residues K22–R31. One can recognise a PAS 1 domain in the interval K86–G159. A required for heterodimer formation with ARNT region spans residues R171–V192. The region spanning P229 to G299 is the PAS 2 domain. S248 is subject to Phosphoserine; by CK1. One can recognise a PAC domain in the interval T303 to I346. Positions A402–Q599 are ODD. P403 is modified (4-hydroxyproline). Polar residues predominate over residues I495–S518. Positions I495 to C521 are disordered. Residues F532 to R576 are NTAD. At K533 the chain carries N6-acetyllysine; alternate. A Glycyl lysine isopeptide (Lys-Gly) (interchain with G-Cter in ubiquitin); alternate cross-link involves residue K533. Glycyl lysine isopeptide (Lys-Gly) (interchain with G-Cter in ubiquitin) cross-links involve residues K539 and K548. Phosphoserine; by GSK3-beta is present on S552. Position 556 is a phosphothreonine; by GSK3-beta (T556). P565 is modified (4-hydroxyproline). The residue at position 577 (S577) is a Phosphoserine; by PLK3. An ID region spans residues S577–Q778. The interval L581–S685 is disordered. Positions S582 to T613 are enriched in low complexity. Basic and acidic residues predominate over residues E614–K628. Residues T632 to T655 show a composition bias toward low complexity. The residue at position 650 (S650) is a Phosphoserine; by PLK3. N6-acetyllysine is present on K702. The short motif at R711–H717 is the Nuclear localization signal element. Residues S779–N819 are CTAD. At C793 the chain carries S-nitrosocysteine. N796 carries the (3S)-3-hydroxyasparagine modification.

As to quaternary structure, interacts with the ARNT; forms a heterodimer that binds core DNA sequence 5'-TACGTG-3' within the hypoxia response element (HRE) of target gene promoters. Interacts with COPS5; the interaction increases the transcriptional activity of HIF1A through increased stability. Interacts with EP300 (via TAZ-type 1 domains); the interaction is stimulated in response to hypoxia and inhibited by CITED2. Interacts with CREBBP (via TAZ-type 1 domains). Interacts with NCOA1, NCOA2, APEX1 and HSP90. Interacts (hydroxylated within the ODD domain) with VHLL (via beta domain); the interaction, leads to polyubiquitination and subsequent HIF1A proteasomal degradation. During hypoxia, sumoylated HIF1A also binds VHL; the interaction promotes the ubiquitination of HIF1A. Interacts with SENP1; the interaction desumoylates HIF1A resulting in stabilization and activation of transcription. Interacts (via the ODD domain) with NAA10; the interaction appears not to acetylate HIF1A nor have any affect on protein stability, during hypoxia. Interacts with RWDD3; the interaction enhances HIF1A sumoylation. Interacts with TSGA10. Interacts with HIF3A. Interacts with RORA (via the DNA binding domain); the interaction enhances HIF1A transcription under hypoxia through increasing protein stability. Interaction with PSMA7 inhibits the transactivation activity of HIF1A under both normoxic and hypoxia-mimicking conditions. Interacts with USP20. Interacts with RACK1; promotes HIF1A ubiquitination and proteasome-mediated degradation. Interacts (via N-terminus) with USP19. Interacts with SIRT2. Interacts (deacetylated form) with EGLN1. Interacts with CBFA2T3. Interacts with HSP90AA1 and HSP90AB1. Interacts with DCUN1D1; this interaction increases the interaction between VHL and DCUN1D1. Interacts with HIF1AN. Post-translationally, S-nitrosylation of Cys-793 may be responsible for increased recruitment of p300 coactivator necessary for transcriptional activity of HIF-1 complex. In terms of processing, acetylation of Lys-533 by ARD1 increases interaction with VHL and stimulates subsequent proteasomal degradation. Deacetylation of Lys-702 by SIRT2 increases its interaction with and hydroxylation by EGLN1 thereby inactivating HIF1A activity by inducing its proteasomal degradation. Requires phosphorylation for DNA-binding. Phosphorylation at Ser-248 by CSNK1D/CK1 represses kinase activity and impairs ARNT binding. Phosphorylation by GSK3-beta and PLK3 promote degradation by the proteasome. Post-translationally, the iron and 2-oxoglutarate dependent 3-hydroxylation of asparagine is (S) stereospecific within HIF CTAD domains. In terms of processing, sumoylated; with SUMO1 under hypoxia. Sumoylation is enhanced through interaction with RWDD3. Both sumoylation and desumoylation seem to be involved in the regulation of its stability during hypoxia. Sumoylation can promote either its stabilization or its VHL-dependent degradation by promoting hydroxyproline-independent HIF1A-VHL complex binding, thus leading to HIF1A ubiquitination and proteasomal degradation. Desumoylation by SENP1 increases its stability amd transcriptional activity. There is a disaccord between various publications on the effect of sumoylation and desumoylation on its stability and transcriptional activity. In normoxia, is hydroxylated on Pro-403 and Pro-565 in the oxygen-dependent degradation domain (ODD) by EGLN1/PHD2 and EGLN2/PHD1. EGLN3/PHD3 has also been shown to hydroxylate Pro-565. The hydroxylated prolines promote interaction with VHL, initiating rapid ubiquitination and subsequent proteasomal degradation. Deubiquitinated by USP20. Under hypoxia, proline hydroxylation is impaired and ubiquitination is attenuated, resulting in stabilization. In normoxia, is hydroxylated on Asn-796 by HIF1AN, thus abrogating interaction with CREBBP and EP300 and preventing transcriptional activation. Repressed by iron ion, via Fe(2+) prolyl hydroxylase (PHD) enzymes-mediated hydroxylation and subsequent proteasomal degradation.

Its subcellular location is the cytoplasm. It localises to the nucleus. The protein resides in the nucleus speckle. Induced by reactive oxygen species (ROS). Functions as a master transcriptional regulator of the adaptive response to hypoxia. Under hypoxic conditions, activates the transcription of over 40 genes, including erythropoietin, glucose transporters, glycolytic enzymes, vascular endothelial growth factor, HILPDA, and other genes whose protein products increase oxygen delivery or facilitate metabolic adaptation to hypoxia. Plays an essential role in embryonic vascularization, tumor angiogenesis and pathophysiology of ischemic disease. Heterodimerizes with ARNT; heterodimer binds to core DNA sequence 5'-TACGTG-3' within the hypoxia response element (HRE) of target gene promoters. Activation requires recruitment of transcriptional coactivators such as CREBBP and EP300. Activity is enhanced by interaction with NCOA1 and/or NCOA2. Interaction with redox regulatory protein APEX1 seems to activate CTAD and potentiates activation by NCOA1 and CREBBP. Involved in the axonal distribution and transport of mitochondria in neurons during hypoxia. The sequence is that of Hypoxia-inducible factor 1-alpha (HIF1A) from Eospalax fontanierii baileyi (Plateau zokor).